The primary structure comprises 232 residues: uncharacterized protein (232 aa).

Residues 10–32 (GLTIYLYPVIAWIILVTKIESGL) form a helical membrane-spanning segment.

Its subcellular location is the membrane. This is an uncharacterized protein from Archaeoglobus fulgidus (strain ATCC 49558 / DSM 4304 / JCM 9628 / NBRC 100126 / VC-16).